Reading from the N-terminus, the 187-residue chain is NADH-dependent FMN reductase SfnF (187 aa).

This sequence belongs to the SsuE family.

The enzyme catalyses FMNH2 + NAD(+) = FMN + NADH + 2 H(+). Functionally, involved in the dimethyl sulfide degradation pathway. Catalyzes the NADH-dependent reduction of FMN. In Pseudomonas fluorescens (strain Pf0-1), this protein is NADH-dependent FMN reductase SfnF.